The primary structure comprises 143 residues: 3-hydroxyacyl-[acyl-carrier-protein] dehydratase FabZ (143 aa).

The active site involves His49.

Belongs to the thioester dehydratase family. FabZ subfamily.

It is found in the cytoplasm. The catalysed reaction is a (3R)-hydroxyacyl-[ACP] = a (2E)-enoyl-[ACP] + H2O. Its function is as follows. Involved in unsaturated fatty acids biosynthesis. Catalyzes the dehydration of short chain beta-hydroxyacyl-ACPs and long chain saturated and unsaturated beta-hydroxyacyl-ACPs. This chain is 3-hydroxyacyl-[acyl-carrier-protein] dehydratase FabZ, found in Wolbachia sp. subsp. Drosophila simulans (strain wRi).